Here is a 110-residue protein sequence, read N- to C-terminus: Large ribosomal subunit protein uL22 (110 aa).

Belongs to the universal ribosomal protein uL22 family. In terms of assembly, part of the 50S ribosomal subunit.

Functionally, this protein binds specifically to 23S rRNA; its binding is stimulated by other ribosomal proteins, e.g. L4, L17, and L20. It is important during the early stages of 50S assembly. It makes multiple contacts with different domains of the 23S rRNA in the assembled 50S subunit and ribosome. Its function is as follows. The globular domain of the protein is located near the polypeptide exit tunnel on the outside of the subunit, while an extended beta-hairpin is found that lines the wall of the exit tunnel in the center of the 70S ribosome. This Pseudomonas savastanoi pv. phaseolicola (strain 1448A / Race 6) (Pseudomonas syringae pv. phaseolicola (strain 1448A / Race 6)) protein is Large ribosomal subunit protein uL22.